The following is a 228-amino-acid chain: Ribose-5-phosphate isomerase A (228 aa).

Substrate-binding positions include 29-32 (TGST), 85-88 (DGAD), and 98-101 (KGGG). Glutamate 107 (proton acceptor) is an active-site residue. Lysine 125 serves as a coordination point for substrate.

The protein belongs to the ribose 5-phosphate isomerase family. In terms of assembly, homodimer.

It catalyses the reaction aldehydo-D-ribose 5-phosphate = D-ribulose 5-phosphate. It participates in carbohydrate degradation; pentose phosphate pathway; D-ribose 5-phosphate from D-ribulose 5-phosphate (non-oxidative stage): step 1/1. In terms of biological role, catalyzes the reversible conversion of ribose-5-phosphate to ribulose 5-phosphate. This is Ribose-5-phosphate isomerase A from Staphylococcus aureus (strain MRSA252).